We begin with the raw amino-acid sequence, 78 residues long: Translational regulator CsrA (78 aa).

The protein belongs to the CsrA/RsmA family. As to quaternary structure, homodimer; the beta-strands of each monomer intercalate to form a hydrophobic core, while the alpha-helices form wings that extend away from the core.

Its subcellular location is the cytoplasm. Its function is as follows. A translational regulator that binds mRNA to regulate translation initiation and/or mRNA stability. Usually binds in the 5'-UTR at or near the Shine-Dalgarno sequence preventing ribosome-binding, thus repressing translation. Its main target seems to be the major flagellin gene, while its function is anatagonized by FliW. This Natranaerobius thermophilus (strain ATCC BAA-1301 / DSM 18059 / JW/NM-WN-LF) protein is Translational regulator CsrA.